Here is a 224-residue protein sequence, read N- to C-terminus: 7-cyano-7-deazaguanine synthase (224 aa).

9–19 provides a ligand contact to ATP; the sequence is LSGGLDSATVL. C189, C199, C202, and C205 together coordinate Zn(2+).

The protein belongs to the QueC family. Zn(2+) serves as cofactor.

The catalysed reaction is 7-carboxy-7-deazaguanine + NH4(+) + ATP = 7-cyano-7-deazaguanine + ADP + phosphate + H2O + H(+). It participates in purine metabolism; 7-cyano-7-deazaguanine biosynthesis. Catalyzes the ATP-dependent conversion of 7-carboxy-7-deazaguanine (CDG) to 7-cyano-7-deazaguanine (preQ(0)). This Ralstonia nicotianae (strain ATCC BAA-1114 / GMI1000) (Ralstonia solanacearum) protein is 7-cyano-7-deazaguanine synthase.